A 168-amino-acid chain; its full sequence is MMWKWVTLLLFVLVCGDNPVNAAAHNPFVCCHQKNETAHTPPKKAWSLVNAILHSPSQCNHTNVALAYFNTTKGYKQVSCVNGFGLMSFCLALFDRLLTINVRVADQKFYDELLGYKRGFAAQFSKATTDSSGFKNNLELDLITTRHGRMASKTHVAGLTRSSASSQL.

The first 22 residues, 1–22, serve as a signal peptide directing secretion; it reads MMWKWVTLLLFVLVCGDNPVNA. The interval 25 to 138 is interaction with gH; it reads HNPFVCCHQK…TDSSGFKNNL (114 aa).

Belongs to the herpesviridae glycoprotein L family. In terms of assembly, interacts with glycoprotein H (gH); this interaction is necessary for the correct processing and cell surface expression of gH. The heterodimer gH/gL seems to interact with gB trimers during fusion.

The protein localises to the virion membrane. The protein resides in the host cell membrane. It localises to the host Golgi apparatus. It is found in the host trans-Golgi network. Functionally, the heterodimer glycoprotein H-glycoprotein L is required for the fusion of viral and plasma membranes leading to virus entry into the host cell. Acts as a functional inhibitor of gH and maintains gH in an inhibited form. Upon binding to host integrins, gL dissociates from gH leading to activation of the viral fusion glycoproteins gB and gH. The sequence is that of Envelope glycoprotein L from Connochaetes taurinus (Blue wildebeest).